The following is a 279-amino-acid chain: Probable endonuclease 4 (279 aa).

Residues His69, His109, Glu145, Asp179, His182, His216, Asp229, His231, and Glu261 each coordinate Zn(2+).

This sequence belongs to the AP endonuclease 2 family. The cofactor is Zn(2+).

The catalysed reaction is Endonucleolytic cleavage to 5'-phosphooligonucleotide end-products.. Its function is as follows. Endonuclease IV plays a role in DNA repair. It cleaves phosphodiester bonds at apurinic or apyrimidinic (AP) sites, generating a 3'-hydroxyl group and a 5'-terminal sugar phosphate. The chain is Probable endonuclease 4 from Desulforapulum autotrophicum (strain ATCC 43914 / DSM 3382 / VKM B-1955 / HRM2) (Desulfobacterium autotrophicum).